Here is a 2471-residue protein sequence, read N- to C-terminus: Polyprotein P1234 (2471 aa).

The region spanning 28-257 (EATQVTDNDH…EERILLRSWH (230 aa)) is the Alphavirus-like MT domain. The interval 242 to 261 (GSTIYTEERILLRSWHLPNV) is nsP1 membrane-binding. Cys-417 carries the S-palmitoyl cysteine; by host lipid modification. Positions 688–839 (DLVDPPFHEF…HEICTEVYHK (152 aa)) constitute a (+)RNA virus helicase ATP-binding domain. 719-726 (GVPGSGKS) contributes to the a ribonucleoside 5'-triphosphate binding site. The region spanning 840–988 (SISRRCTRTV…LEEWQAEHDA (149 aa)) is the (+)RNA virus helicase C-terminal domain. One can recognise a Peptidase C9 domain in the interval 1001 to 1320 (DVYQNKVHVC…VVLNNIYQGS (320 aa)). The nucleolus localization signal stretch occupies residues 1002–1021 (VYQNKVHVCWAKALEPVLAT). Cys-1010 serves as the catalytic For cysteine protease nsP2 activity. The Nuclear export signal signature appears at 1054-1063 (TRFFGVDIDS). His-1079 (for cysteine protease nsP2 activity) is an active-site residue. A Nuclear localization signal motif is present at residues 1177 to 1181 (PGKRV). In terms of domain architecture, Macro spans 1328 to 1486 (APAYRVIRGD…RIKDAIARKE (159 aa)). Residues Asp-1337, Asn-1351, Gly-1359, Gly-1438, Val-1439, and Tyr-1440 each coordinate ADP-D-ribose. Zn(2+)-binding residues include Cys-1589, Cys-1591, Cys-1614, and Cys-1632. Residues 1669 to 1692 (RRPAPPVPVPARIPSPRCSPAVSM) form a disordered region. Residues 1670–1681 (RPAPPVPVPARI) show a composition bias toward pro residues. The binding to host G3BP family members stretch occupies residues 1771–1783 (LITFDSVTDIFEN). The tract at residues 1798–1838 (IPAPRRRREPETDIQRFDKSEEKPVPKPRTRTAKYKKPPGV) is disordered. Over residues 1805–1822 (REPETDIQRFDKSEEKPV) the composition is skewed to basic and acidic residues. Residues 1823–1834 (PKPRTRTAKYKK) are compositionally biased toward basic residues. Residues 1835 to 1851 (PPGVARSISEAELDEFI) form a binding to host FXR family members region. The 116-residue stretch at 2228-2343 (DAVLETDIAS…KGVKSDALMA (116 aa)) folds into the RdRp catalytic domain.

In terms of assembly, interacts with non-structural protein 3. Interacts with RNA-directed RNA polymerase nsP4. Interacts with protease nsP2. interacts with itself. As to quaternary structure, interacts with mRNA-capping enzyme nsP1. Interacts with host DDX1. Interacts with host DDX3. Interacts (via C-terminus) with host FXR1; this interaction inhibits the formation of host stress granules on viral mRNAs and the nsp3-FXR1 complexes bind viral RNAs and probably orchestrate the assembly of viral replication complexes. Interacts (via C-terminus) with host FXR2; this interaction inhibits the formation of host stress granules on viral mRNAs and the nsp3-FXR2 complexes bind viral RNAs and probably orchestrate the assembly of viral replication complexes. Interacts (via C-terminus) with host FMR1; this interaction inhibits the formation of host stress granules on viral mRNAs and the nsp3-FMR1 complexes bind viral RNAs and probably orchestrate the assembly of viral replication complexes. Interacts (via C-terminus) with host G3BP1; this interaction inhibits the formation of host stress granules on viral mRNAs and the nsp3-G3BP1 complexes bind viral RNAs and probably orchestrate the assembly of viral replication complexes. Interacts (via C-terminus) with host G3BP2; this interaction inhibits the formation of host stress granules on viral mRNAs and the nsp3-G3BP2 complexes bind viral RNAs and probably orchestrate the assembly of viral replication complexes. Interacts with mRNA-capping enzyme nsP1. Interacts with protease nsP2. interacts with itself. In terms of assembly, interacts with RNA-directed RNA polymerase nsP4. Interacts with mRNA-capping enzyme nsP1. Interacts with KPNA1/karyopherin-alpha1; this interaction probably allows the active transport of protease nsP2 into the host nucleus. It depends on Mg(2+) as a cofactor. Mn(2+) serves as cofactor. Specific enzymatic cleavages in vivo yield mature proteins. The processing of the polyprotein is temporally regulated. In early stages (1.7 hpi), P1234 is first cleaved in trans through its nsP2 protease activity, releasing P123' and nsP4, which associate to form the early replication complex. At the same time, P1234 is also cut at the nsP1/nsP2 site early in infection but with lower efficiency. After replication of the viral minus-strand RNAs (4 hpi), the polyproteins are cut at the nsP1/nsP2 and nsP2/nsP3 sites very efficiently, preventing accumulation of P123' and P1234 and allowing the formation of the late replication complex. NsP3'/nsP4 site is not cleaved anymore and P34 is produced rather than nsP4. In terms of processing, specific enzymatic cleavages in vivo yield mature proteins. The processing of the polyprotein is temporally regulated. In early stages (1.7 hpi), P123 is cleaved at the nsP1/nsP2 site with low efficiency. After replication of the viral minus-strand RNAs (4 hpi), the polyproteins are cut at the nsP1/nsP2 and nsP2/nsP3 sites very efficiently, preventing accumulation of P123 and allowing the formation of the late replication complex. Post-translationally, specific enzymatic cleavages in vivo yield mature proteins. The processing of the polyprotein is temporally regulated. In early stages (1.7 hpi), P123' is cleaved at the nsP1/nsP2 site with low efficiency. After replication of the viral minus-strand RNAs (4 hpi), the polyproteins are cut at the nsP1/nsP2 and nsP2/nsP3 sites very efficiently, preventing accumulation of P123' and allowing the formation of the late replication complex. Palmitoylated by host palmitoyltransferases ZDHHC2 and ZDHHC19. In terms of processing, phosphorylated by host on serines and threonines. Post-translationally, ubiquitinated; targets the protein for rapid degradation via the ubiquitin system. Nsp4 is present in extremely low quantities due to low frequency of translation through the amber stop-codon and the degradation by the ubiquitin pathway.

The protein localises to the host cytoplasmic vesicle membrane. Its subcellular location is the host cell membrane. The protein resides in the host cell projection. It is found in the host filopodium. It localises to the host nucleus. The protein localises to the host cytoplasm. It catalyses the reaction GTP + S-adenosyl-L-methionine = N(7)-methyl-GTP + S-adenosyl-L-homocysteine. The enzyme catalyses N(7)-methyl-GTP + L-histidyl-[protein] = N(tele)-(N(7)-methylguanosine 5'-phospho)-L-histidyl-[protein] + diphosphate. It carries out the reaction N(tele)-(N(7)-methylguanosine 5'-phospho)-L-histidyl-[protein] + a 5'-end diphospho-(purine-ribonucleoside) in mRNA + H(+) = a 5'-end (N(7)-methyl 5'-triphosphoguanosine)-(purine-ribonucleoside) in mRNA + L-histidyl-[protein]. The catalysed reaction is a 5'-end triphospho-ribonucleoside in mRNA + H2O = a 5'-end diphospho-ribonucleoside in mRNA + phosphate + H(+). It catalyses the reaction a ribonucleoside 5'-triphosphate + H2O = a ribonucleoside 5'-diphosphate + phosphate + H(+). The enzyme catalyses ATP + H2O = ADP + phosphate + H(+). It carries out the reaction RNA(n) + a ribonucleoside 5'-triphosphate = RNA(n+1) + diphosphate. The catalysed reaction is 4-O-(ADP-D-ribosyl)-L-aspartyl-[protein] + H2O = L-aspartyl-[protein] + ADP-D-ribose + H(+). It catalyses the reaction 5-O-(ADP-D-ribosyl)-L-glutamyl-[protein] + H2O = L-glutamyl-[protein] + ADP-D-ribose + H(+). The enzyme catalyses RNA(n) + ATP = RNA(n)-3'-adenine ribonucleotide + diphosphate. It carries out the reaction ADP-alpha-D-ribose 1''-phosphate + H2O = ADP-D-ribose + phosphate. Inhibited by sinefungin. In terms of biological role, inactive precursor of the viral replicase, which is activated by cleavages carried out by the viral protease nsP2. Its function is as follows. The early replication complex formed by the polyprotein P123 and nsP4 synthesizes the minus-strand RNAs (antigenome). Polyprotein P123 is a short-lived polyprotein that accumulates during early stage of infection. As soon P123 is cleaved into mature proteins, the plus-strand RNAs synthesis begins. The early replication complex formed by the polyprotein P123' and nsP4 synthesizes minus-strand RNAs (antigenome). Polyprotein P123' is a short-lived polyprotein that accumulates during early stage of infection. As soon P123' is cleaved into mature proteins, the plus-strand RNAs synthesis begins. Functionally, cytoplasmic capping enzyme that catalyzes two virus-specific reactions: methyltransferase and nsP1 guanylyltransferase. mRNA-capping is necessary since all viral RNAs are synthesized in the cytoplasm, and host capping enzymes are restricted to the nucleus. The enzymatic reaction involves a covalent link between 7-methyl-GMP and nsP1, whereas eukaryotic capping enzymes form a covalent complex only with GMP. NsP1 capping consists in the following reactions: GTP is first methylated into 7-methyl-GMP and then is covalently linked to nsP1 to form the m7GMp-nsP1 complex from which 7-methyl-GMP complex is transferred to the mRNA to create the cap structure. NsP1 is also needed for the initiation of the minus-strand RNAs synthesis. Probably serves as a membrane anchor for the replication complex composed of nsP1-nsP4. Nsp1 is needed for the initiation of the minus-strand RNAs synthesis. Palmitoylated nsP1 is remodeling host cell cytoskeleton, and induces filopodium-like structure formation at the surface of the host cell. In terms of biological role, multifunctional protein whose N-terminus is part of the RNA polymerase complex and displays NTPase, RNA triphosphatase and helicase activities. NTPase and RNA triphosphatase are involved in viral RNA capping and helicase keeps a check on the dsRNA replication intermediates. The C-terminus harbors a protease that specifically cleaves the polyproteins and releases the mature proteins. Required for the shutoff of minus-strand RNAs synthesis. Inhibits host translation to ensure maximal viral gene expression and evade host immune response. Its function is as follows. Seems to be essential for minus-strand RNAs and subgenomic 26S mRNAs synthesis. Displays mono-ADP-ribosylhydrolase activity. ADP-ribosylation is a post-translational modification that controls various processes of the host cell and the virus probably needs to revert it for optimal viral replication. Binds proteins of FXR and G3BP families and sequesters them into the viral RNA replication complexes thereby inhibiting the formation of host stress granules on viral mRNAs. The nsp3-FXR and nsp3-G3BP complexes bind viral RNAs and probably orchestrate the assembly of viral replication complexes, thanks to the ability of G3BP and FXR family members to self-assemble and bind DNA. Seems to be essential for minus-strand RNAs and subgenomic 26S mRNAs synthesis. Displays mono-ADP-ribosylhydrolase activity. ADP-ribosylation is a post-translational modification that controls various processes of the host cell and the virus probably needs to revert it for optimal viral replication. Binds proteins of FXR and G3BP families and sequesters them into the viral RNA replication complexes thereby inhibiting the formation of host stress granules on viral mRNAs. The nsp3'-FXR and nsp3-G3BP complexes bind viral RNAs and probably orchestrate the assembly of viral replication complexes, thanks to the ability of G3BP and FXR family members to self-assemble and bind DNA. Functionally, RNA dependent RNA polymerase. Replicates genomic and antigenomic RNA by recognizing replications specific signals. The early replication complex formed by the polyprotein P123 and nsP4 synthesizes minus-strand RNAs. The late replication complex composed of fully processed nsP1-nsP4 is responsible for the production of genomic and subgenomic plus-strand RNAs. The protein is Polyprotein P1234 of Eastern equine encephalitis virus (strain PE-0.0155) (EEEV).